A 141-amino-acid chain; its full sequence is Putative pre-16S rRNA nuclease (141 aa).

Belongs to the YqgF nuclease family.

It is found in the cytoplasm. Its function is as follows. Could be a nuclease involved in processing of the 5'-end of pre-16S rRNA. In Histophilus somni (strain 129Pt) (Haemophilus somnus), this protein is Putative pre-16S rRNA nuclease.